Here is a 750-residue protein sequence, read N- to C-terminus: Photosystem I P700 chlorophyll a apoprotein A1 (750 aa).

8 helical membrane-spanning segments follow: residues 70–93, 156–179, 195–219, 291–309, 346–369, 385–411, 433–455, and 531–549; these read VFSA…FHGA, LYCT…FHYH, LNHH…HVSL, IVHH…GHMY, WHAQ…HHMY, LSLF…IFMV, AIIS…LYIH, and FLVH…LILL. The [4Fe-4S] cluster site is built by C573 and C582. Helical transmembrane passes span 589 to 610 and 664 to 686; these read HVFL…HFSW and LSAY…MFLF. Chlorophyll a' is bound at residue H675. Chlorophyll a-binding residues include M683 and Y691. W692 lines the phylloquinone pocket. Residues 724–744 traverse the membrane as a helical segment; sequence AVGVTHYLLGGIATTWAFFLA.

This sequence belongs to the PsaA/PsaB family. In terms of assembly, the PsaA/B heterodimer binds the P700 chlorophyll special pair and subsequent electron acceptors. PSI consists of a core antenna complex that captures photons, and an electron transfer chain that converts photonic excitation into a charge separation. The eukaryotic PSI reaction center is composed of at least 11 subunits. P700 is a chlorophyll a/chlorophyll a' dimer, A0 is one or more chlorophyll a, A1 is one or both phylloquinones and FX is a shared 4Fe-4S iron-sulfur center. serves as cofactor.

It localises to the plastid. Its subcellular location is the chloroplast thylakoid membrane. It carries out the reaction reduced [plastocyanin] + hnu + oxidized [2Fe-2S]-[ferredoxin] = oxidized [plastocyanin] + reduced [2Fe-2S]-[ferredoxin]. Its function is as follows. PsaA and PsaB bind P700, the primary electron donor of photosystem I (PSI), as well as the electron acceptors A0, A1 and FX. PSI is a plastocyanin-ferredoxin oxidoreductase, converting photonic excitation into a charge separation, which transfers an electron from the donor P700 chlorophyll pair to the spectroscopically characterized acceptors A0, A1, FX, FA and FB in turn. Oxidized P700 is reduced on the lumenal side of the thylakoid membrane by plastocyanin. This Piper cenocladum (Ant piper) protein is Photosystem I P700 chlorophyll a apoprotein A1.